A 98-amino-acid polypeptide reads, in one-letter code: Large ribosomal subunit protein uL23 (98 aa).

It belongs to the universal ribosomal protein uL23 family. As to quaternary structure, part of the 50S ribosomal subunit. Contacts protein L29, and trigger factor when it is bound to the ribosome.

In terms of biological role, one of the early assembly proteins it binds 23S rRNA. One of the proteins that surrounds the polypeptide exit tunnel on the outside of the ribosome. Forms the main docking site for trigger factor binding to the ribosome. The sequence is that of Large ribosomal subunit protein uL23 from Halorhodospira halophila (strain DSM 244 / SL1) (Ectothiorhodospira halophila (strain DSM 244 / SL1)).